Reading from the N-terminus, the 699-residue chain is Glycine--tRNA ligase beta subunit (699 aa).

It belongs to the class-II aminoacyl-tRNA synthetase family. As to quaternary structure, tetramer of two alpha and two beta subunits.

Its subcellular location is the cytoplasm. It carries out the reaction tRNA(Gly) + glycine + ATP = glycyl-tRNA(Gly) + AMP + diphosphate. In Bradyrhizobium diazoefficiens (strain JCM 10833 / BCRC 13528 / IAM 13628 / NBRC 14792 / USDA 110), this protein is Glycine--tRNA ligase beta subunit.